Reading from the N-terminus, the 273-residue chain is 1,4-dihydroxy-2-naphthoyl-CoA synthase (273 aa).

Substrate-binding positions include R34, 73–77 (SGGDQ), Y85, 117–121 (YAVGG), T143, S149, Y246, and K261. Position 142 to 144 (142 to 144 (QTG)) interacts with hydrogencarbonate. A compositionally biased stretch (basic and acidic residues) spans 254–265 (GRDAFKEKRDPD). Residues 254–273 (GRDAFKEKRDPDFDQFPKFP) form a disordered region.

This sequence belongs to the enoyl-CoA hydratase/isomerase family. MenB subfamily. It depends on hydrogencarbonate as a cofactor.

The enzyme catalyses 2-succinylbenzoyl-CoA + H(+) = 1,4-dihydroxy-2-naphthoyl-CoA + H2O. It participates in quinol/quinone metabolism; 1,4-dihydroxy-2-naphthoate biosynthesis; 1,4-dihydroxy-2-naphthoate from chorismate: step 6/7. Its pathway is quinol/quinone metabolism; menaquinone biosynthesis. Converts o-succinylbenzoyl-CoA (OSB-CoA) to 1,4-dihydroxy-2-naphthoyl-CoA (DHNA-CoA). The chain is 1,4-dihydroxy-2-naphthoyl-CoA synthase from Staphylococcus aureus (strain Mu50 / ATCC 700699).